An 88-amino-acid polypeptide reads, in one-letter code: Apolipoprotein C-I (88 aa).

Positions Met-1–Ala-26 are cleaved as a signal peptide.

This sequence belongs to the apolipoprotein C1 family.

The protein localises to the secreted. Functionally, inhibitor of lipoprotein binding to the low density lipoprotein (LDL) receptor, LDL receptor-related protein, and very low density lipoprotein (VLDL) receptor. Associates with high density lipoproteins (HDL) and the triacylglycerol-rich lipoproteins in the plasma and makes up about 10% of the protein of the VLDL and 2% of that of HDL. Appears to interfere directly with fatty acid uptake and is also the major plasma inhibitor of cholesteryl ester transfer protein (CETP). Binds free fatty acids and reduces their intracellular esterification. Modulates the interaction of APOE with beta-migrating VLDL and inhibits binding of beta-VLDL to the LDL receptor-related protein. The chain is Apolipoprotein C-I (APOC1) from Phoca vitulina (Harbor seal).